A 168-amino-acid polypeptide reads, in one-letter code: uncharacterized protein (168 aa).

One can recognise a PfpI endopeptidase domain in the interval 1-166; the sequence is MRVLILAENE…FCGELIKILK (166 aa).

The protein belongs to the peptidase C56 family.

This is an uncharacterized protein from Archaeoglobus fulgidus (strain ATCC 49558 / DSM 4304 / JCM 9628 / NBRC 100126 / VC-16).